A 423-amino-acid polypeptide reads, in one-letter code: Glucose-1-phosphate adenylyltransferase (423 aa).

Alpha-D-glucose 1-phosphate-binding positions include Y98, G163, 178-179 (EK), and S189.

It belongs to the bacterial/plant glucose-1-phosphate adenylyltransferase family. Homotetramer.

It catalyses the reaction alpha-D-glucose 1-phosphate + ATP + H(+) = ADP-alpha-D-glucose + diphosphate. Its pathway is glycan biosynthesis; glycogen biosynthesis. Involved in the biosynthesis of ADP-glucose, a building block required for the elongation reactions to produce glycogen. Catalyzes the reaction between ATP and alpha-D-glucose 1-phosphate (G1P) to produce pyrophosphate and ADP-Glc. This Thermotoga sp. (strain RQ2) protein is Glucose-1-phosphate adenylyltransferase.